Here is a 225-residue protein sequence, read N- to C-terminus: MNNILKNDWNNYIGNEFEKDYYLKLRKNLAQEYKTKTIYPDMYNIFNALHYTAFDDVKVVILGQDPYHGPNQAHGLSFSVNPGVRTPPSLLNIYKELKDDIGCYIPNNGYLKKWADQGVLLLNTVLTVRAGEANSHKNIGWQIFTDNIIKVLNTREKPIVFILWGNNAIRKEELITNPKHHIIKSVHPSPLSASRGFFGSKPFSKTNEFLKNDNEIPIDWQIENL.

Residue Asp-65 is the Proton acceptor of the active site.

This sequence belongs to the uracil-DNA glycosylase (UDG) superfamily. UNG family.

The protein localises to the cytoplasm. The catalysed reaction is Hydrolyzes single-stranded DNA or mismatched double-stranded DNA and polynucleotides, releasing free uracil.. In terms of biological role, excises uracil residues from the DNA which can arise as a result of misincorporation of dUMP residues by DNA polymerase or due to deamination of cytosine. In Clostridium botulinum (strain Alaska E43 / Type E3), this protein is Uracil-DNA glycosylase.